Here is a 205-residue protein sequence, read N- to C-terminus: N-(5'-phosphoribosyl)anthranilate isomerase (205 aa).

This sequence belongs to the TrpF family.

It carries out the reaction N-(5-phospho-beta-D-ribosyl)anthranilate = 1-(2-carboxyphenylamino)-1-deoxy-D-ribulose 5-phosphate. It participates in amino-acid biosynthesis; L-tryptophan biosynthesis; L-tryptophan from chorismate: step 3/5. The chain is N-(5'-phosphoribosyl)anthranilate isomerase from Trichlorobacter lovleyi (strain ATCC BAA-1151 / DSM 17278 / SZ) (Geobacter lovleyi).